Here is a 640-residue protein sequence, read N- to C-terminus: Lysophospholipase (640 aa).

The N-terminal stretch at Met-1–Ala-25 is a signal peptide. A PLA2c domain is found at Asp-38–Asp-589. Residues Asn-84, Asn-126, Asn-163, Asn-173, Asn-218, Asn-280, Asn-310, Asn-317, Asn-348, Asn-391, Asn-492, Asn-516, Asn-544, Asn-568, and Asn-585 are each glycosylated (N-linked (GlcNAc...) asparagine). The span at Ile-594–Ser-610 shows a compositional bias: low complexity. A disordered region spans residues Ile-594–Ser-616.

The protein belongs to the lysophospholipase family. Highly glycosylated.

The protein resides in the secreted. It catalyses the reaction a 1-acyl-sn-glycero-3-phosphocholine + H2O = sn-glycerol 3-phosphocholine + a fatty acid + H(+). In terms of biological role, catalyzes the release of fatty acids from lysophospholipids. At acidic pH the enzyme hydrolyzes all phospholipid substrates without metal ion. On the other hand, at alkaline pH the enzyme shows substrate specificity for phosphatidylcholine and lysophosphatidylcholine and requires Ca(2+), Fe(3+), or Al(3+) for the activity. The protein is Lysophospholipase (PLB) of Kluyveromyces lactis (strain ATCC 8585 / CBS 2359 / DSM 70799 / NBRC 1267 / NRRL Y-1140 / WM37) (Yeast).